A 94-amino-acid polypeptide reads, in one-letter code: uncharacterized protein (94 aa).

Helical transmembrane passes span 7-24 (IFFIIVLVGFALFMSFNV) and 39-61 (AVPITLSLLFAFACGALTALLFL). Residues 68–94 (TRKQKREDSPTSAPTGGVSSPEHVDVP) form a disordered region.

The protein resides in the cell membrane. This is an uncharacterized protein from Treponema pallidum (strain Nichols).